The chain runs to 166 residues: 3-isopropylmalate dehydratase small subunit 2 (166 aa).

This sequence belongs to the LeuD family. LeuD type 2 subfamily. As to quaternary structure, heterodimer of LeuC and LeuD.

The catalysed reaction is (2R,3S)-3-isopropylmalate = (2S)-2-isopropylmalate. It participates in amino-acid biosynthesis; L-leucine biosynthesis; L-leucine from 3-methyl-2-oxobutanoate: step 2/4. Its function is as follows. Catalyzes the isomerization between 2-isopropylmalate and 3-isopropylmalate, via the formation of 2-isopropylmaleate. This is 3-isopropylmalate dehydratase small subunit 2 (leuD2) from Thermotoga maritima (strain ATCC 43589 / DSM 3109 / JCM 10099 / NBRC 100826 / MSB8).